A 161-amino-acid chain; its full sequence is Large ribosomal subunit protein uL15 (161 aa).

Residues 1–43 (MKLSEISDNPGARKKRMRIGRGIGSGKGKTGGRGGKGQTARSG) form a disordered region. The segment covering 21 to 37 (RGIGSGKGKTGGRGGKG) has biased composition (gly residues).

This sequence belongs to the universal ribosomal protein uL15 family. As to quaternary structure, part of the 50S ribosomal subunit.

Functionally, binds to the 23S rRNA. In Rhodopseudomonas palustris (strain BisB5), this protein is Large ribosomal subunit protein uL15.